Consider the following 318-residue polypeptide: Nisin-resistance protein (318 aa).

The helical transmembrane segment at 7-28 (ILLGLVAVCALFLGIIYLWGYK) threads the bilayer.

It localises to the cell membrane. This chain is Nisin-resistance protein (nsr), found in Lactococcus lactis subsp. lactis (Streptococcus lactis).